The chain runs to 228 residues: Ribose-5-phosphate isomerase A (228 aa).

Residues 29–32 (TGST), 84–87 (DGAD), and 97–100 (KGGG) contribute to the substrate site. Glu-106 functions as the Proton acceptor in the catalytic mechanism. Lys-124 is a binding site for substrate.

It belongs to the ribose 5-phosphate isomerase family. As to quaternary structure, homodimer.

The enzyme catalyses aldehydo-D-ribose 5-phosphate = D-ribulose 5-phosphate. It participates in carbohydrate degradation; pentose phosphate pathway; D-ribose 5-phosphate from D-ribulose 5-phosphate (non-oxidative stage): step 1/1. Catalyzes the reversible conversion of ribose-5-phosphate to ribulose 5-phosphate. In Sphingopyxis alaskensis (strain DSM 13593 / LMG 18877 / RB2256) (Sphingomonas alaskensis), this protein is Ribose-5-phosphate isomerase A.